We begin with the raw amino-acid sequence, 252 residues long: N-acetylglucosaminyl-phosphatidylinositol de-N-acetylase (252 aa).

A helical transmembrane segment spans residues 2–22; that stretch reads ELVGFLCVAVAVLTWGFLRVW. Residues 23 to 252 are Cytoplasmic-facing; the sequence is NSAERMRSPE…YMRINSLRFL (230 aa).

The protein belongs to the PIGL family.

Its subcellular location is the endoplasmic reticulum membrane. The catalysed reaction is a 6-(N-acetyl-alpha-D-glucosaminyl)-1-(1,2-diacyl-sn-glycero-3-phospho)-1D-myo-inositol + H2O = a 6-(alpha-D-glucosaminyl)-1-(1,2-diacyl-sn-glycero-3-phospho)-1D-myo-inositol + acetate. Its pathway is glycolipid biosynthesis; glycosylphosphatidylinositol-anchor biosynthesis. In terms of biological role, catalyzes the second step of glycosylphosphatidylinositol (GPI) biosynthesis, which is the de-N-acetylation of N-acetylglucosaminyl-phosphatidylinositol. This is N-acetylglucosaminyl-phosphatidylinositol de-N-acetylase (Pigl) from Mus musculus (Mouse).